Here is a 339-residue protein sequence, read N- to C-terminus: MKLAVIGGDGIGPEVTAEALKVLNAVRDDIEVTDYDLGARRYLRNGELLADADLVSLREHDAILLGAIGAPGEVPPGVLERGLLLKMRFALDHHVNLRPSKLYPTATSPLANPGDIDFVVVREGTEGLYCGNGGTLREGTPHEIASEVSQNTRYGVERVVRDAFERAQNRKKHLTLVHKTNVLVNAGGLWQRTVNEIATEYPEVTVDYNHIDAATIYMVTDPSRYDVIVTDNLFGDILTDLAGAVTGGIGLAASGNIDATGVNPSMFEPVHGSAPDIAGQGIADPTAAILSAAMLLRHVGDESNAQRIEAAVTYDVAERPAGPVKTVEVGDRIVAALQR.

Arg-88, Arg-98, Arg-122, and Asp-212 together coordinate substrate. Residues Asp-212, Asp-236, and Asp-240 each contribute to the Mg(2+) site. Residue Gly-272–Asp-284 participates in NAD(+) binding.

Belongs to the isocitrate and isopropylmalate dehydrogenases family. LeuB type 2 subfamily. In terms of assembly, homodimer. Requires Mg(2+) as cofactor. Mn(2+) is required as a cofactor.

It localises to the cytoplasm. It carries out the reaction (2R,3S)-3-isopropylmalate + NAD(+) = 4-methyl-2-oxopentanoate + CO2 + NADH. Its pathway is amino-acid biosynthesis; L-leucine biosynthesis; L-leucine from 3-methyl-2-oxobutanoate: step 3/4. Its function is as follows. Catalyzes the oxidation of 3-carboxy-2-hydroxy-4-methylpentanoate (3-isopropylmalate) to 3-carboxy-4-methyl-2-oxopentanoate. The product decarboxylates to 4-methyl-2 oxopentanoate. In Corynebacterium diphtheriae (strain ATCC 700971 / NCTC 13129 / Biotype gravis), this protein is 3-isopropylmalate dehydrogenase.